Here is a 419-residue protein sequence, read N- to C-terminus: Histidine--tRNA ligase (419 aa).

This sequence belongs to the class-II aminoacyl-tRNA synthetase family. As to quaternary structure, homodimer.

The protein resides in the cytoplasm. It catalyses the reaction tRNA(His) + L-histidine + ATP = L-histidyl-tRNA(His) + AMP + diphosphate + H(+). The sequence is that of Histidine--tRNA ligase from Synechococcus sp. (strain JA-3-3Ab) (Cyanobacteria bacterium Yellowstone A-Prime).